A 322-amino-acid chain; its full sequence is RNA-binding protein KhpB (322 aa).

Residues 3 to 52 form a jag_N domain region; it reads VFEGNTVAAAIAAGLKQLHRTRDQVEVEVIAEAKKGFLGLGKHPAQVRLT. A compositionally biased stretch (low complexity) spans 58–82; the sequence is AAPATTPTSATATAQQSVATESTTA. The disordered stretch occupies residues 58-162; it reads AAPATTPTSA…AADQSQTPRT (105 aa). T89 carries the phosphothreonine modification. The span at 89-99 shows a compositional bias: polar residues; that stretch reads TVQTPKSTPTR. Over residues 100 to 129 the composition is skewed to low complexity; the sequence is QAKTSQATTSAAKPATSKAKAVAKPASMAV. The segment covering 141-161 has biased composition (polar residues); sequence SKPATTSKTKSVAADQSQTPR. Residues 174-251 enclose the KH domain; it reads ETAVRALCDY…ASHVNVVLDV (78 aa). Positions 256–322 constitute an R3H domain; the sequence is ERRAATLKRL…HRAVVVAIRK (67 aa).

In terms of assembly, forms a complex with KhpA.

The protein resides in the cytoplasm. Functionally, a probable RNA chaperone. Forms a complex with KhpA which binds to cellular RNA and controls its expression. Plays a role in peptidoglycan (PG) homeostasis and cell length regulation. Its function is as follows. Necessary for correct cell elongation. The polypeptide is RNA-binding protein KhpB (Lactiplantibacillus plantarum (strain ATCC BAA-793 / NCIMB 8826 / WCFS1) (Lactobacillus plantarum)).